The primary structure comprises 308 residues: Transaldolase (308 aa).

Residue K125 is the Schiff-base intermediate with substrate of the active site.

Belongs to the transaldolase family. Type 1 subfamily. Homodimer.

Its subcellular location is the cytoplasm. The enzyme catalyses D-sedoheptulose 7-phosphate + D-glyceraldehyde 3-phosphate = D-erythrose 4-phosphate + beta-D-fructose 6-phosphate. It participates in carbohydrate degradation; pentose phosphate pathway; D-glyceraldehyde 3-phosphate and beta-D-fructose 6-phosphate from D-ribose 5-phosphate and D-xylulose 5-phosphate (non-oxidative stage): step 2/3. Functionally, transaldolase is important for the balance of metabolites in the pentose-phosphate pathway. This Pseudomonas fluorescens (strain Pf0-1) protein is Transaldolase.